A 122-amino-acid chain; its full sequence is Urease subunit beta (122 aa).

Belongs to the urease beta subunit family. As to quaternary structure, heterotrimer of UreA (gamma), UreB (beta) and UreC (alpha) subunits. Three heterotrimers associate to form the active enzyme.

It localises to the cytoplasm. The enzyme catalyses urea + 2 H2O + H(+) = hydrogencarbonate + 2 NH4(+). It functions in the pathway nitrogen metabolism; urea degradation; CO(2) and NH(3) from urea (urease route): step 1/1. This is Urease subunit beta from Lysinibacillus sphaericus (strain C3-41).